Here is a 345-residue protein sequence, read N- to C-terminus: MNLADFDYHLPPERIAAEPARPRHAARLLHVRGDGLDDRTILDLPALLAPGDLLVVNDTRVIPAQLTGRRGDARIGITLDRPLADGTWRVLLRNARRARPGETIAIDGAGGIAAEVIDRAPDGSATLRFDCDAETFRAMLDRAASLALPPYIPRPAGISEQDRQDYQTMFAAEEGAVAAPTAGLHFTETVLAALAARGVGLATVTLHVGAGTFLPVREDQLERHKLHAERGLIGPETAALVNATRARGGRIVAVGTTSLRVLETAAGDDGTLAPWHGETELFITPGYRFKLVDRLMTNFHLPKSTLLMLVAAFAGVERMRAAYAHAIARGYRFYSYGDASLLERA.

This sequence belongs to the QueA family. As to quaternary structure, monomer.

The protein localises to the cytoplasm. It carries out the reaction 7-aminomethyl-7-carbaguanosine(34) in tRNA + S-adenosyl-L-methionine = epoxyqueuosine(34) in tRNA + adenine + L-methionine + 2 H(+). The protein operates within tRNA modification; tRNA-queuosine biosynthesis. Its function is as follows. Transfers and isomerizes the ribose moiety from AdoMet to the 7-aminomethyl group of 7-deazaguanine (preQ1-tRNA) to give epoxyqueuosine (oQ-tRNA). The sequence is that of S-adenosylmethionine:tRNA ribosyltransferase-isomerase from Acidiphilium cryptum (strain JF-5).